The primary structure comprises 593 residues: BBSome complex member BBS1 (593 aa).

At Ala-2 the chain carries N-acetylalanine.

As to quaternary structure, part of BBSome complex, that contains BBS1, BBS2, BBS4, BBS5, BBS7, BBS8/TTC8, BBS9 and BBIP10. Interacts with the C-terminus of RAB3IP. Interacts with CCDC28B and ALDOB. Interacts with PKD1. In terms of tissue distribution, highly expressed in the kidney. Also found in fetal tissue, testis, retina, adipose tissue, heart, skeletal muscle and pancreas.

It localises to the cell projection. The protein resides in the cilium membrane. It is found in the cytoplasm. Its subcellular location is the cytoskeleton. The protein localises to the microtubule organizing center. It localises to the centrosome. The protein resides in the centriolar satellite. Its function is as follows. The BBSome complex is thought to function as a coat complex required for sorting of specific membrane proteins to the primary cilia. The BBSome complex is required for ciliogenesis but is dispensable for centriolar satellite function. This ciliogenic function is mediated in part by the Rab8 GDP/GTP exchange factor, which localizes to the basal body and contacts the BBSome. Rab8(GTP) enters the primary cilium and promotes extension of the ciliary membrane. Firstly the BBSome associates with the ciliary membrane and binds to RAB3IP/Rabin8, the guanosyl exchange factor (GEF) for Rab8 and then the Rab8-GTP localizes to the cilium and promotes docking and fusion of carrier vesicles to the base of the ciliary membrane. The BBSome complex, together with the LTZL1, controls SMO ciliary trafficking and contributes to the sonic hedgehog (SHH) pathway regulation. Required for proper BBSome complex assembly and its ciliary localization. Plays a role in olfactory cilium biogenesis/maintenance and trafficking. The chain is BBSome complex member BBS1 (BBS1) from Homo sapiens (Human).